Consider the following 174-residue polypeptide: Variant surface antigen F (174 aa).

The signal sequence occupies residues 1–29 (MKKSIFSKKLLFSFGSLVALAAIPLITIS). Cysteine 30 is lipidated: N-palmitoyl cysteine. A lipid anchor (S-diacylglycerol cysteine) is attached at cysteine 30. The interval 32–174 (QTNTDQSQQP…PEQGNSQVSK (143 aa)) is disordered. The segment covering 43 to 53 (SGSGSGSGTSN) has biased composition (gly residues). 9 repeat units span residues 55–67 (SGST…GNNQ), 68–80 (GGST…GNNQ), 81–93 (GGST…GNNQ), 94–106 (GGST…GNNQ), 107–119 (GGST…GNNQ), 120–132 (GGST…GNNQ), 133–145 (GGST…GNNQ), 146–158 (GGST…GNNQ), and 159–171 (GGST…GNSQ). A 9 X 13 AA tandem repeats region spans residues 55 to 171 (SGSTPTPEQG…TPTPEQGNSQ (117 aa)). Polar residues predominate over residues 62 to 174 (EQGNNQGGST…PEQGNSQVSK (113 aa)).

The protein localises to the cell membrane. Its function is as follows. Responsible for the antigenic diversity for host adaptation. Expression in E.coli of a construct containing vlpD, vlpE, and vlpF yields antigenically distinguishable products corresponding to each gene. In Mesomycoplasma hyorhinis (Mycoplasma hyorhinis), this protein is Variant surface antigen F (vlpF).